The sequence spans 108 residues: Thioredoxin C-2 (108 aa).

Residues 2–108 (SATIVNTTDE…KLAAFIDQNI (107 aa)) enclose the Thioredoxin domain. A disulfide bridge links C33 with C36.

Belongs to the thioredoxin family.

Functionally, participates in various redox reactions through the reversible oxidation of its active center dithiol to a disulfide and catalyzes dithiol-disulfide exchange reactions. This chain is Thioredoxin C-2, found in Corynebacterium nephridii.